A 96-amino-acid polypeptide reads, in one-letter code: Co-chaperonin GroES (96 aa).

This sequence belongs to the GroES chaperonin family. As to quaternary structure, heptamer of 7 subunits arranged in a ring. Interacts with the chaperonin GroEL.

Its subcellular location is the cytoplasm. Functionally, together with the chaperonin GroEL, plays an essential role in assisting protein folding. The GroEL-GroES system forms a nano-cage that allows encapsulation of the non-native substrate proteins and provides a physical environment optimized to promote and accelerate protein folding. GroES binds to the apical surface of the GroEL ring, thereby capping the opening of the GroEL channel. The polypeptide is Co-chaperonin GroES (Paraburkholderia phymatum (strain DSM 17167 / CIP 108236 / LMG 21445 / STM815) (Burkholderia phymatum)).